The sequence spans 48 residues: Large ribosomal subunit protein eL40 (48 aa).

This sequence belongs to the eukaryotic ribosomal protein eL40 family.

This chain is Large ribosomal subunit protein eL40, found in Methanoculleus marisnigri (strain ATCC 35101 / DSM 1498 / JR1).